An 861-amino-acid chain; its full sequence is Semaphorin-4D (861 aa).

Positions 1 to 23 (MRMCAPVRGLFLALVVVLRTAVA) are cleaved as a signal peptide. In terms of domain architecture, Sema spans 24–500 (FAPVPRLTWE…SNSGVVQAPL (477 aa)). Over 24–733 (FAPVPRLTWE…TVYLKSSDNR (710 aa)) the chain is Extracellular. N49 and N77 each carry an N-linked (GlcNAc...) asparagine glycan. 2 cysteine pairs are disulfide-bonded: C97-C108 and C126-C135. Residues N139 and N191 are each glycosylated (N-linked (GlcNAc...) asparagine). Disulfide bonds link C257–C370 and C281–C326. Residues N379 and N419 are each glycosylated (N-linked (GlcNAc...) asparagine). The 50-residue stretch at 502 to 551 (FCEKHGSCEDCVLARDPYCAWSPAIKACVTLHQEEASSRGWIQDMSGDTS) folds into the PSI domain. 4 disulfides stabilise this stretch: C503–C520, C509–C553, C512–C529, and C576–C624. Residues 555-636 (DKSKESFNQH…EERVRNKTVS (82 aa)) enclose the Ig-like C2-type domain. Residues N613 and N632 are each glycosylated (N-linked (GlcNAc...) asparagine). Residues 649-709 (VPRTPPSPTS…KSSSGTSCEP (61 aa)) are disordered. The span at 657–681 (TSEDAQTEGSKITSKMPVASTQGSS) shows a compositional bias: polar residues. The chain crosses the membrane as a helical span at residues 734–754 (LLMSLLLFIFVLFLCLFSYNC). Topologically, residues 755–861 (YKGYLPGQCL…KFADSDADGD (107 aa)) are cytoplasmic. Phosphoserine occurs at positions 782 and 832. Positions 793–839 (VEPGSFSQQNGDHPKPALDTGYETEQDTITSKVPTDREDSQRIDELS) are disordered. Residues 826-839 (PTDREDSQRIDELS) show a composition bias toward basic and acidic residues.

This sequence belongs to the semaphorin family. As to quaternary structure, homodimer. Interacts with PLXNB1. Interacts with PLXNB2. Strongly expressed in lymphoid tissues, especially in the thymus, as well as in the nervous tissues. Expressed in neurons and glia in the developing hippocampus.

The protein localises to the cell membrane. Functionally, cell surface receptor for PLXNB1 and PLXNB2 that plays an important role in cell-cell signaling. Regulates GABAergic synapse development. Promotes the development of inhibitory synapses in a PLXNB1-dependent manner. Modulates the complexity and arborization of developing neurites in hippocampal neurons by activating PLXNB1 and interaction with PLXNB1 mediates activation of RHOA. Promotes the migration of cerebellar granule cells. Plays a role in the immune system; induces B-cells to aggregate and improves their viability (in vitro). Induces endothelial cell migration through the activation of PTK2B/PYK2, SRC, and the phosphatidylinositol 3-kinase-AKT pathway. This is Semaphorin-4D (Sema4d) from Mus musculus (Mouse).